The following is a 341-amino-acid chain: Ribosomal RNA small subunit methyltransferase H (341 aa).

S-adenosyl-L-methionine contacts are provided by residues 47–49 (GGY), D64, F91, D109, and Q116. The tract at residues 292–319 (VAASEEEASRNPRARSAKLRAGVRTEAP) is disordered.

It belongs to the methyltransferase superfamily. RsmH family.

The protein resides in the cytoplasm. It catalyses the reaction cytidine(1402) in 16S rRNA + S-adenosyl-L-methionine = N(4)-methylcytidine(1402) in 16S rRNA + S-adenosyl-L-homocysteine + H(+). Specifically methylates the N4 position of cytidine in position 1402 (C1402) of 16S rRNA. In Rhizobium meliloti (strain 1021) (Ensifer meliloti), this protein is Ribosomal RNA small subunit methyltransferase H.